The following is a 218-amino-acid chain: Embryonic polyadenylate-binding protein 2-B (218 aa).

2 disordered regions span residues 1–24 and 169–218; these read MSER…ELDD and RTNM…NNPY. Residues 93–170 enclose the RRM domain; that stretch reads RSVYVGNVDY…RTIKVLPKRT (78 aa). Residues 198–209 show a composition bias toward basic residues; the sequence is QRPRGRPFRGRG.

Homodimer; Upon poly(A) binding, undergoes a dimer-monomer transition that removes the polyproline motif from the RNA recognition site and allows it to be replaced by the adenosine nucleotides of poly(A).

It is found in the cytoplasm. Binds the poly(A) tail of mRNA. Unable to interact with the cap-binding complex and is therefore unlikely to be involved in translation initiation. This Xenopus laevis (African clawed frog) protein is Embryonic polyadenylate-binding protein 2-B (Pabpn1l-b).